Consider the following 430-residue polypeptide: Glutamate-1-semialdehyde 2,1-aminomutase (430 aa).

N6-(pyridoxal phosphate)lysine is present on Lys-265.

Belongs to the class-III pyridoxal-phosphate-dependent aminotransferase family. HemL subfamily. As to quaternary structure, homodimer. It depends on pyridoxal 5'-phosphate as a cofactor.

The protein resides in the cytoplasm. The catalysed reaction is (S)-4-amino-5-oxopentanoate = 5-aminolevulinate. Its pathway is porphyrin-containing compound metabolism; protoporphyrin-IX biosynthesis; 5-aminolevulinate from L-glutamyl-tRNA(Glu): step 2/2. This Helicobacter pylori (strain Shi470) protein is Glutamate-1-semialdehyde 2,1-aminomutase.